A 212-amino-acid polypeptide reads, in one-letter code: Urease accessory protein UreG (212 aa).

11–18 serves as a coordination point for GTP; it reads GPVGSGKT.

Belongs to the SIMIBI class G3E GTPase family. UreG subfamily. As to quaternary structure, homodimer. UreD, UreF and UreG form a complex that acts as a GTP-hydrolysis-dependent molecular chaperone, activating the urease apoprotein by helping to assemble the nickel containing metallocenter of UreC. The UreE protein probably delivers the nickel.

Its subcellular location is the cytoplasm. Facilitates the functional incorporation of the urease nickel metallocenter. This process requires GTP hydrolysis, probably effectuated by UreG. This chain is Urease accessory protein UreG, found in Trichodesmium erythraeum (strain IMS101).